A 184-amino-acid polypeptide reads, in one-letter code: Nucleoside triphosphate pyrophosphatase (184 aa).

Aspartate 71 functions as the Proton acceptor in the catalytic mechanism.

This sequence belongs to the Maf family. The cofactor is a divalent metal cation.

It is found in the cytoplasm. It catalyses the reaction a ribonucleoside 5'-triphosphate + H2O = a ribonucleoside 5'-phosphate + diphosphate + H(+). It carries out the reaction a 2'-deoxyribonucleoside 5'-triphosphate + H2O = a 2'-deoxyribonucleoside 5'-phosphate + diphosphate + H(+). Functionally, nucleoside triphosphate pyrophosphatase. May have a dual role in cell division arrest and in preventing the incorporation of modified nucleotides into cellular nucleic acids. The polypeptide is Nucleoside triphosphate pyrophosphatase (Synechococcus sp. (strain CC9605)).